The primary structure comprises 230 residues: Ribonuclease 3 (230 aa).

Residues 5–125 (YSRFYNILGY…VIGAIYLDSD (121 aa)) form the RNase III domain. E40 contributes to the Mg(2+) binding site. D44 is an active-site residue. Positions 111 and 114 each coordinate Mg(2+). E114 is a catalytic residue. The region spanning 153–223 (DSKSKLQEIL…AEKMIEMLSQ (71 aa)) is the DRBM domain.

Belongs to the ribonuclease III family. In terms of assembly, homodimer. Mg(2+) is required as a cofactor.

It is found in the cytoplasm. The enzyme catalyses Endonucleolytic cleavage to 5'-phosphomonoester.. Functionally, digests double-stranded RNA. Involved in the processing of primary rRNA transcript to yield the immediate precursors to the large and small rRNAs (23S and 16S). Processes some mRNAs, and tRNAs when they are encoded in the rRNA operon. Processes pre-crRNA and tracrRNA of type II CRISPR loci if present in the organism. The sequence is that of Ribonuclease 3 from Francisella tularensis subsp. holarctica (strain OSU18).